A 316-amino-acid polypeptide reads, in one-letter code: RNA interference defective protein 11 (316 aa).

An RING-type; degenerate zinc finger spans residues 183–218 (CYINFNCQTSKVMFGCGHVYCEQCLNSWNDKPCSVC).

In terms of assembly, interacts (via RING-type zinc finger domain) with rde-10.

Its function is as follows. In complex with rde-10, required in the endogenous and exogenous siRNA pathway for biogenesis and accumulation of secondary small interfering RNA (siRNA) intermediates, such as 22G-siRNAs derived from ergo-1 targets. The polypeptide is RNA interference defective protein 11 (Caenorhabditis elegans).